The chain runs to 526 residues: Microphthalmia-associated transcription factor (526 aa).

Ser-5 carries the post-translational modification Phosphoserine; by MTOR. Disordered regions lie at residues 20–54 and 155–179; these read EPKT…STMT and VLSS…SAPN. Residues 34 to 44 are compositionally biased toward low complexity; that stretch reads SSSSAEHSGAS. Phosphoserine; by MAPK is present on Ser-180. Positions 224-291 are transactivation; it reads DDVIDDIISL…PANLPNIKRE (68 aa). Ser-280 carries the post-translational modification Phosphoserine. Lys-289 participates in a covalent cross-link: Glycyl lysine isopeptide (Lys-Gly) (interchain with G-Cter in SUMO). The bHLH domain occupies 311–364; sequence QKKDNHNLIERRRRFNINDRIKELGTLIPKSNDPDMRWNKGTILKASVDYIRKL. The stretch at 355 to 401 forms a coiled coil; that stretch reads KASVDYIRKLQREQQRAKDLENRQKKLEHANRHLLLRVQELEMQARA. The leucine-zipper stretch occupies residues 374–395; it reads LENRQKKLEHANRHLLLRVQEL. The tract at residues 401 to 431 is DNA-binding regulation; sequence AHGLSLIPSTGLCSPDLVNRIIKQEPVLENC. Ser-405 carries the post-translational modification Phosphoserine; by GSK3. At Ser-414 the chain carries Phosphoserine. Lys-423 participates in a covalent cross-link: Glycyl lysine isopeptide (Lys-Gly) (interchain with G-Cter in SUMO). At Ser-491 the chain carries Phosphoserine. Residues 496–526 are disordered; that stretch reads TDPLLSSVSPGASKTSSRRSSMSAEETEHAC. Positions 507–519 are enriched in low complexity; sequence ASKTSSRRSSMSA. A Phosphoserine; by RPS6KA1 modification is found at Ser-516.

This sequence belongs to the MiT/TFE family. As to quaternary structure, homodimer or heterodimer; dimerization is mediated via the coiled coil region. Efficient DNA binding requires dimerization with another bHLH protein. Binds DNA in the form of homodimer or heterodimer with either TFE3, TFEB or TFEC. Interacts with small GTPases Rag (RagA/RRAGA, RagB/RRAGB, RagC/RRAGC and/or RagD/RRAGD); promoting its recruitment to lysosomal membrane in the presence of nutrients. Interacts with KARS1. Identified in a complex with HINT1 and CTNNB1. Interacts with VSX2. In terms of processing, when nutrients are present, phosphorylation by MTOR at Ser-5 via non-canonical mTORC1 pathway promotes ubiquitination by the SCF(BTRC) complex, followed by degradation. Phosphorylation at Ser-405 significantly enhances the ability to bind the tyrosinase promoter. Phosphorylation by MARK3/cTAK1 at Ser-280 promotes association with 14-3-3/YWHA adapters and retention in the cytosol. Phosphorylated at Ser-180 and Ser-516 following KIT signaling, triggering a short live activation: Phosphorylation at Ser-180 and Ser-516 by MAPK and RPS6KA1, respectively, activate the transcription factor activity but also promote ubiquitination and subsequent degradation by the proteasome. Phosphorylated in response to blue light (415nm). Ubiquitinated by the SCF(BTRC) and SCF(FBXW11) complexes following phosphorylation ar Ser-5 by MTOR, leading to its degradation by the proteasome. Ubiquitinated following phosphorylation at Ser-180, leading to subsequent degradation by the proteasome. Deubiquitinated by USP13, preventing its degradation. In the adult, expressed at high levels in the heart, skin, skeletal muscle, intestine, stomach, kidney, ovary, lung, spleen and brain. In the embryo, expressed in developing eye, ear, skin and heart. Isoform M is expressed in melanocytes and also in the embryonic and adult heart while isoform A and isoform H are more widely expressed.

It is found in the nucleus. It localises to the cytoplasm. Its subcellular location is the lysosome membrane. Its function is as follows. Transcription factor that acts as a master regulator of melanocyte survival and differentiation as well as melanosome biogenesis. Binds to M-boxes (5'-TCATGTG-3') and symmetrical DNA sequences (E-boxes) (5'-CACGTG-3') found in the promoter of pigmentation genes, such as tyrosinase (TYR). Involved in the cellular response to amino acid availability by acting downstream of MTOR: in the presence of nutrients, MITF phosphorylation by MTOR promotes its inactivation. Upon starvation or lysosomal stress, inhibition of MTOR induces MITF dephosphorylation, resulting in transcription factor activity. Plays an important role in melanocyte development by regulating the expression of tyrosinase (TYR) and tyrosinase-related protein 1 (TYRP1). Plays a critical role in the differentiation of various cell types, such as neural crest-derived melanocytes, mast cells, osteoclasts and optic cup-derived retinal pigment epithelium. The chain is Microphthalmia-associated transcription factor (Mitf) from Mus musculus (Mouse).